The chain runs to 446 residues: Methylenetetrahydrofolate--tRNA-(uracil-5-)-methyltransferase TrmFO (446 aa).

An FAD-binding site is contributed by 9–14 (GGGMAG).

Belongs to the MnmG family. TrmFO subfamily. Requires FAD as cofactor.

The protein resides in the cytoplasm. It carries out the reaction uridine(54) in tRNA + (6R)-5,10-methylene-5,6,7,8-tetrahydrofolate + NADH + H(+) = 5-methyluridine(54) in tRNA + (6S)-5,6,7,8-tetrahydrofolate + NAD(+). The enzyme catalyses uridine(54) in tRNA + (6R)-5,10-methylene-5,6,7,8-tetrahydrofolate + NADPH + H(+) = 5-methyluridine(54) in tRNA + (6S)-5,6,7,8-tetrahydrofolate + NADP(+). Functionally, catalyzes the folate-dependent formation of 5-methyl-uridine at position 54 (M-5-U54) in all tRNAs. This is Methylenetetrahydrofolate--tRNA-(uracil-5-)-methyltransferase TrmFO from Ruegeria sp. (strain TM1040) (Silicibacter sp.).